A 118-amino-acid chain; its full sequence is Large ribosomal subunit protein uL18 (118 aa).

The protein belongs to the universal ribosomal protein uL18 family. As to quaternary structure, part of the 50S ribosomal subunit; part of the 5S rRNA/L5/L18/L25 subcomplex. Contacts the 5S and 23S rRNAs.

Functionally, this is one of the proteins that bind and probably mediate the attachment of the 5S RNA into the large ribosomal subunit, where it forms part of the central protuberance. This Brachyspira hyodysenteriae (strain ATCC 49526 / WA1) protein is Large ribosomal subunit protein uL18.